Reading from the N-terminus, the 266-residue chain is Protein-ADP-ribose hydrolase (266 aa).

In terms of domain architecture, Macro spans Thr74–Ala265. Residues Asp93, Ile94, and Asn107 each contribute to the ADP-D-ribose site. Residues Cys113, His118, and Cys120 each coordinate Zn(2+). Residues Cys120, Ile121, Asp122, Ser212, Thr213, Gly214, and Phe216 each coordinate ADP-D-ribose.

Belongs to the MacroD-type family. Zn-Macro subfamily. Requires Zn(2+) as cofactor.

It carries out the reaction 4-O-(ADP-D-ribosyl)-L-aspartyl-[protein] + H2O = L-aspartyl-[protein] + ADP-D-ribose + H(+). Its function is as follows. ADP-ribosylhydrolase that specifically reverses the SirTM-mediated mono-ADP-ribosylation at an asparatate residue of GcvH-L, by releasing ADP-ribose from the target protein. May play a role in the regulation of the response to host-induced oxidative stress. The chain is Protein-ADP-ribose hydrolase from Staphylococcus aureus (strain MSSA476).